The primary structure comprises 120 residues: Protein BEX4 (120 aa).

The segment at 1 to 54 (MESKEELAANNLNGENAQQENEGGEQAPTQNEEESRHLGGGEGQKPGGNIRRGR) is disordered. Positions 8–27 (AANNLNGENAQQENEGGEQA) are enriched in low complexity. Residues 31-90 (NEEESRHLGGGEGQKPGGNIRRGRVRRLVPNFRWAIPNRHIEHNEARDDVERFVGQMMEI) are interaction with SIRT2. An interaction with alpha-tubulin region spans residues 31 to 120 (NEEESRHLGG…DNHYDFCLIP (90 aa)). Cys117 is a binding site for Zn(2+).

It belongs to the BEX family. Interacts with alpha-tubulin. Interacts with SIRT2. Post-translationally, ubiquitinated and degraded by the proteasome. As to expression, very high expression in heart, skeletal muscle, liver, and kidney. The levels of expression are uniform throughout the brain.

It localises to the cytoplasm. The protein resides in the cytoskeleton. The protein localises to the spindle pole. Its subcellular location is the nucleus. Its function is as follows. May play a role in microtubule deacetylation by negatively regulating the SIRT2 deacetylase activity toward alpha-tubulin and thereby participate in the control of cell cycle progression and genomic stability. In absence of reductive stress, acts as a pseudosubstrate for the CRL2(FEM1B) complex: associates with FEM1B via zinc, thereby preventing association between FEM1B and its substrates. The chain is Protein BEX4 from Homo sapiens (Human).